We begin with the raw amino-acid sequence, 247 residues long: Ribonuclease 3 (247 aa).

In terms of domain architecture, RNase III spans 21–149 (FKKLSKKIGI…LVGAIYLDRG (129 aa)). Glu62 serves as a coordination point for Mg(2+). Asp66 is a catalytic residue. 2 residues coordinate Mg(2+): Asn135 and Glu138. Glu138 is a catalytic residue. One can recognise a DRBM domain in the interval 176–245 (DYKTQLQEYS…AKELYIRIRR (70 aa)).

The protein belongs to the ribonuclease III family. As to quaternary structure, homodimer. Requires Mg(2+) as cofactor.

It is found in the cytoplasm. The catalysed reaction is Endonucleolytic cleavage to 5'-phosphomonoester.. Functionally, digests double-stranded RNA. Involved in the processing of primary rRNA transcript to yield the immediate precursors to the large and small rRNAs (23S and 16S). Processes some mRNAs, and tRNAs when they are encoded in the rRNA operon. Processes pre-crRNA and tracrRNA of type II CRISPR loci if present in the organism. The sequence is that of Ribonuclease 3 from Leptospira borgpetersenii serovar Hardjo-bovis (strain L550).